A 220-amino-acid polypeptide reads, in one-letter code: Claudin-3 (220 aa).

At 1-8 the chain is on the cytoplasmic side; the sequence is MSMGLEIT. The helical transmembrane segment at 9 to 29 threads the bilayer; it reads GTALAVLGWLGTIVCCALPMW. Residues 30–80 are Extracellular-facing; the sequence is RVSAFIGSNIITSQNIWEGLWMNCVVQSTGQMQCKVYDSLLALPQDLQAAR. The chain crosses the membrane as a helical span at residues 81 to 101; that stretch reads ALIVVAILLAAFGLLVALVGA. The Cytoplasmic segment spans residues 102 to 115; sequence QCTNCVQDDTAKAK. The chain crosses the membrane as a helical span at residues 116–136; it reads ITIVAGVLFLLAALLTLVPVS. The Extracellular segment spans residues 137–159; sequence WSANTIIRDFYNPVVPEAQKREM. Residues 160 to 180 traverse the membrane as a helical segment; that stretch reads GAGLYVGWAAAALQLLGGALL. Over 181–220 the chain is Cytoplasmic; sequence CCSCPPREKKYTATKVVYSAPRSTGPGASLGTGYDRKDYV. Phosphotyrosine is present on Tyr-198. A phosphoserine mark is found at Ser-199 and Ser-209. An interactions with TJP1, TJP2 and TJP3 region spans residues 219–220; it reads YV.

The protein belongs to the claudin family. Can form homo- and heteropolymers with other CLDN. Homopolymers interact with CLDN1 and CLDN2 homopolymers. Interacts in cis (within the same plasma membrane) with CLDN19. Directly interacts with TJP1/ZO-1, TJP2/ZO-2 and TJP3/ZO-3.

It is found in the cell junction. The protein localises to the tight junction. The protein resides in the cell membrane. In terms of biological role, barrier-forming claudin. Plays a major role in tight junction-specific obliteration of the intercellular space, through calcium-independent cell-adhesion activity. This Homo sapiens (Human) protein is Claudin-3 (CLDN3).